We begin with the raw amino-acid sequence, 448 residues long: MGKYFGTDGVRGVANSELTPELAFKIGRFGGYVLTKDKERPKVLVGRDTRVSGHMLEGALVAGLLSIGAEVMRLGVISTPGVSYLTKAMDAEAGVMISASHNPVQDNGIKFFGGDGFKLSDEQENEIEQLMDQPVDQLPRPVGADLGTVNDYFEGGQKYLQFLKQTADEDFTGIHVALDCAHGATSSLATHLFADLDADVSTMGTSPNGLNINDGVGSTHPEALSVFVKEKGADIGLAFDGDGDRLIAVDEKGDIVDGDQIMYICARYLKGEGRLKDNTVVSTVMSNLGFYKALEKQGIKSIQTAVGDRYVVEAMKKDGYNVGGEQSGHLIFLDYNTTGDGMLSAIMLVNTLKATGKTLSELAAEMEKFPQLLVNVKVSDKYKVEENEKVKAVIQEVEKEMNGDGRILVRPSGTEPLVRVMAEAKTKELCDEYVTRITAVVKEEMGIE.

S100 serves as the catalytic Phosphoserine intermediate. Mg(2+)-binding residues include S100, D240, D242, and D244. At S100 the chain carries Phosphoserine.

Belongs to the phosphohexose mutase family. The cofactor is Mg(2+). Activated by phosphorylation.

It carries out the reaction alpha-D-glucosamine 1-phosphate = D-glucosamine 6-phosphate. Its function is as follows. Catalyzes the conversion of glucosamine-6-phosphate to glucosamine-1-phosphate. In Bacillus pumilus (strain SAFR-032), this protein is Phosphoglucosamine mutase.